A 232-amino-acid chain; its full sequence is Large ribosomal subunit protein uL1 (232 aa).

This sequence belongs to the universal ribosomal protein uL1 family. In terms of assembly, part of the 50S ribosomal subunit.

Its function is as follows. Binds directly to 23S rRNA. The L1 stalk is quite mobile in the ribosome, and is involved in E site tRNA release. Protein L1 is also a translational repressor protein, it controls the translation of the L11 operon by binding to its mRNA. This chain is Large ribosomal subunit protein uL1, found in Chelativorans sp. (strain BNC1).